We begin with the raw amino-acid sequence, 185 residues long: Large ribosomal subunit protein uL5 (185 aa).

The protein belongs to the universal ribosomal protein uL5 family. Part of the 50S ribosomal subunit; part of the 5S rRNA/L5/L18/L25 subcomplex. Contacts the 5S rRNA and the P site tRNA. Forms a bridge to the 30S subunit in the 70S ribosome.

This is one of the proteins that bind and probably mediate the attachment of the 5S RNA into the large ribosomal subunit, where it forms part of the central protuberance. In the 70S ribosome it contacts protein S13 of the 30S subunit (bridge B1b), connecting the 2 subunits; this bridge is implicated in subunit movement. Contacts the P site tRNA; the 5S rRNA and some of its associated proteins might help stabilize positioning of ribosome-bound tRNAs. This Treponema pallidum (strain Nichols) protein is Large ribosomal subunit protein uL5.